The chain runs to 66 residues: MAKGKDVRIRVILQCVSCVRKGANEESAGISRYSTQKNRHNTPGQLELRKFCRYCRKHTIHAEIKK.

The protein belongs to the bacterial ribosomal protein bL33 family.

It is found in the plastid. It localises to the chloroplast. This Oryza nivara (Indian wild rice) protein is Large ribosomal subunit protein bL33c.